Reading from the N-terminus, the 385-residue chain is Transcription termination factor 2, mitochondrial (385 aa).

The N-terminal 35 residues, 1 to 35 (MPWRLPTGHQLCRLCLLRKPRPALKIKPSSACVTY), are a transit peptide targeting the mitochondrion.

It belongs to the mTERF family. In terms of assembly, monomer.

The protein resides in the mitochondrion matrix. It localises to the mitochondrion nucleoid. Functionally, binds mitochondrial DNA and plays a role in the regulation of transcription of mitochondrial mRNA and rRNA species. This is Transcription termination factor 2, mitochondrial (Mterf2) from Mus musculus (Mouse).